Reading from the N-terminus, the 379-residue chain is Transaminase htyB (379 aa).

Arginine 92 provides a ligand contact to pyridoxal 5'-phosphate. Residue lysine 203 is modified to N6-(pyridoxal phosphate)lysine. Residue glutamate 239 coordinates pyridoxal 5'-phosphate.

It belongs to the class-IV pyridoxal-phosphate-dependent aminotransferase family. Requires pyridoxal 5'-phosphate as cofactor.

Its pathway is antifungal biosynthesis. Transaminase; part of the gene cluster that mediates the de novo generation of L-homotyrosine from acetyl-CoA and 4-hydroxyphenyl-pyruvate. L-homotyrosine is a building block of echinocandin B, a fungal lipidated cyclic hexapeptide that acts as an antifungal agent. L-homotyrosine 4-hydroxyphenyl-pyruvate first undergoes an aldol-type condensation by htyA with the C-2 of acetyl-CoA followed by the release of CoA to form 2-(4-hydroxybenzyl)-malate. This is followed by isomerization of 2-(4-hydroxy-benzyl)-malate to 3-(4-hydroxybenzyl)-malate by htyD. Thereafter, 3-(4-hydroxybenzyl)-malate undergoes decarboxylation and oxidation to form 2-oxo-4-(4-hydroxybenzyl)butanoic acid, coupled to reduction of NAD(+) to NADH by htyC. The product then undergoes transamination catalyzed by htyB to form L-homotyrosine. The polypeptide is Transaminase htyB (Aspergillus rugulosus (Emericella rugulosa)).